Here is a 167-residue protein sequence, read N- to C-terminus: Lipoprotein signal peptidase (167 aa).

2 helical membrane passes run 67–87 (WILVALTLFAILLLSIWLWRA) and 91–111 (LVALALGCIIGGALGNAIDRI). Residues Asp-118 and Asp-136 contribute to the active site. The helical transmembrane segment at 127 to 147 (FSWYVFNLADAAIVAGVALLI) threads the bilayer.

This sequence belongs to the peptidase A8 family.

It localises to the cell inner membrane. The catalysed reaction is Release of signal peptides from bacterial membrane prolipoproteins. Hydrolyzes -Xaa-Yaa-Zaa-|-(S,diacylglyceryl)Cys-, in which Xaa is hydrophobic (preferably Leu), and Yaa (Ala or Ser) and Zaa (Gly or Ala) have small, neutral side chains.. It participates in protein modification; lipoprotein biosynthesis (signal peptide cleavage). In terms of biological role, this protein specifically catalyzes the removal of signal peptides from prolipoproteins. In Beijerinckia indica subsp. indica (strain ATCC 9039 / DSM 1715 / NCIMB 8712), this protein is Lipoprotein signal peptidase.